The primary structure comprises 128 residues: Transcription antitermination protein NusB (128 aa).

The protein belongs to the NusB family.

Its function is as follows. Involved in transcription antitermination. Required for transcription of ribosomal RNA (rRNA) genes. Binds specifically to the boxA antiterminator sequence of the ribosomal RNA (rrn) operons. This chain is Transcription antitermination protein NusB, found in Listeria monocytogenes serotype 4b (strain CLIP80459).